We begin with the raw amino-acid sequence, 1337 residues long: Receptor-type tyrosine-protein phosphatase eta (1337 aa).

A signal peptide spans 1 to 35; that stretch reads MKPAAREARLPPRSPGLRWALPLLLLLLRLGQILC. At 36 to 975 the chain is on the extracellular side; sequence AGGTPSPIPD…LPQDPGVICG (940 aa). 2 stretches are compositionally biased toward polar residues: residues 67 to 82 and 89 to 119; these read SFHKQNGTGTPQVETN and SSGANDSLRTPEQGSNGTDGASQKTPSSTGP. Residues 67 to 124 form a disordered region; it reads SFHKQNGTGTPQVETNTSEDGESSGANDSLRTPEQGSNGTDGASQKTPSSTGPSPVFD. N72, N82, N93, N104, N142, N172, N192, N231, N258, N278, N342, N351, N376, N391, N396, N413, N431, N501, N525, N536, N582, N603, N618, N628, N637, N666, N669, N761, N772, N784, N790, N824, N910, and N937 each carry an N-linked (GlcNAc...) asparagine glycan. Fibronectin type-III domains are found at residues 121 to 209, 207 to 291, 271 to 364, 368 to 456, 457 to 541, 542 to 623, 625 to 720, 721 to 817, and 816 to 902; these read PVFD…EPIP, PIPV…EGGL, NPYL…EFRT, QVFD…PPVP, VSDF…TVPS, AVFD…TAQY, RPSN…TDPA, SMAS…TDPP, and PPPP…SEVL. The segment at 278-327 is disordered; the sequence is NKTKGDPLGTEGGLDASNTERSRAGSPTAPVHDESLVGPVDPSSGQQSRD. Residues 976–996 form a helical membrane-spanning segment; sequence AVFGCIFGALVIVTVGGFIFW. Topologically, residues 997–1337 are cytoplasmic; it reads RKKRKDAKNN…TFGKTNGYIA (341 aa). S1009 is subject to Phosphoserine. The region spanning 1041–1298 is the Tyrosine-protein phosphatase domain; it reads FAEEYEDLKL…VFLNQCVLDI (258 aa). Substrate is bound by residues D1205, 1239–1245, and Q1283; that span reads CSAGVGR. The active-site Phosphocysteine intermediate is the C1239.

The protein belongs to the protein-tyrosine phosphatase family. Receptor class 3 subfamily. In terms of assembly, monomer. Interacts with CTNNB1 (phosphorylated) and JUP (phosphorylated). Interacts with FLT3 (phosphorylated). Interacts with GAB1 and GRB2. N- and O-glycosylated. Post-translationally, N-glycosylated. In terms of tissue distribution, expressed in the promyelocytic cell line HL-60, the granulocyte-macrophage colony-stimulating factor-dependent leukemic cell line F-36P, and the IL3 and erythropoietin-dependent leukemic cell line F-36E. Expressed predominantly in epithelial cells and lymphocytes. Enhanced expression at high cell density. As to expression, expressed in the brain.

Its subcellular location is the cell membrane. The protein localises to the cell projection. It localises to the ruffle membrane. It is found in the cell junction. The protein resides in the secreted. Its subcellular location is the extracellular space. The catalysed reaction is O-phospho-L-tyrosyl-[protein] + H2O = L-tyrosyl-[protein] + phosphate. In terms of biological role, tyrosine phosphatase which dephosphorylates or contributes to the dephosphorylation of CTNND1, FLT3, PDGFRB, MET, KDR, LYN, SRC, MAPK1, MAPK3, EGFR, TJP1, OCLN, PIK3R1 and PIK3R2. Plays a role in cell adhesion, migration, proliferation and differentiation. Has a role in megakaryocytes and platelet formation. Involved in vascular development. Regulator of macrophage adhesion and spreading. Positively affects cell-matrix adhesion. Positive regulator of platelet activation and thrombosis. Negative regulator of cell proliferation. Negative regulator of PDGF-stimulated cell migration; through dephosphorylation of PDGFR. Positive regulator of endothelial cell survival, as well as of VEGF-induced SRC and AKT activation; through KDR dephosphorylation. Negative regulator of EGFR signaling pathway; through EGFR dephosphorylation. Enhances the barrier function of epithelial junctions during reassembly. Negatively regulates T-cell receptor (TCR) signaling. Upon T-cell TCR activation, it is up-regulated and excluded from the immunological synapses, while upon T-cell-antigen presenting cells (APC) disengagement, it is no longer excluded and can dephosphorylate PLCG1 and LAT to down-regulate prolongation of signaling. Functionally, activates angiogenesis and cell migration. Downregulates the expression of the endothelial adhesion molecules ICAM1 and VCAM1. The protein is Receptor-type tyrosine-protein phosphatase eta (PTPRJ) of Homo sapiens (Human).